A 128-amino-acid polypeptide reads, in one-letter code: Large ribosomal subunit protein bL12 (128 aa).

It belongs to the bacterial ribosomal protein bL12 family. As to quaternary structure, homodimer. Part of the ribosomal stalk of the 50S ribosomal subunit. Forms a multimeric L10(L12)X complex, where L10 forms an elongated spine to which 2 to 4 L12 dimers bind in a sequential fashion. Binds GTP-bound translation factors.

Forms part of the ribosomal stalk which helps the ribosome interact with GTP-bound translation factors. Is thus essential for accurate translation. This is Large ribosomal subunit protein bL12 from Corynebacterium efficiens (strain DSM 44549 / YS-314 / AJ 12310 / JCM 11189 / NBRC 100395).